A 239-amino-acid polypeptide reads, in one-letter code: Purine nucleoside phosphorylase DeoD-type (239 aa).

His5 lines the a purine D-ribonucleoside pocket. Phosphate contacts are provided by Gly21 and Arg25. An N6-acetyllysine modification is found at Lys27. Phosphate contacts are provided by residues Arg44 and 88-91 (RVGS). Residues 180–182 (EME) and 204–205 (SD) contribute to the a purine D-ribonucleoside site. Residue Asp205 is the Proton donor of the active site.

The protein belongs to the PNP/UDP phosphorylase family. In terms of assembly, homohexamer; trimer of homodimers.

It catalyses the reaction a purine D-ribonucleoside + phosphate = a purine nucleobase + alpha-D-ribose 1-phosphate. The enzyme catalyses a purine 2'-deoxy-D-ribonucleoside + phosphate = a purine nucleobase + 2-deoxy-alpha-D-ribose 1-phosphate. Catalyzes the reversible phosphorolytic breakdown of the N-glycosidic bond in the beta-(deoxy)ribonucleoside molecules, with the formation of the corresponding free purine bases and pentose-1-phosphate. This chain is Purine nucleoside phosphorylase DeoD-type, found in Shigella dysenteriae serotype 1 (strain Sd197).